Here is a 372-residue protein sequence, read N- to C-terminus: Oxoglutarate-dependent flavonoid 7-O-demethylase 1 (372 aa).

The Fe2OG dioxygenase domain occupies 221 to 321 (GIQALRMNYY…RLSVAAFLNP (101 aa)). Fe cation-binding residues include His245, Asp247, and His302. Residue Arg312 coordinates 2-oxoglutarate.

The protein belongs to the iron/ascorbate-dependent oxidoreductase family. Monomer. The cofactor is Fe(2+). Requires L-ascorbate as cofactor. In terms of tissue distribution, accumulates in the trichomes of nevadensin-accumulating strains (e.g. cv. SD and cv. EMX-1) and in cv. SW (at protein level) but not in cv. MC.

It is found in the cytoplasm. It carries out the reaction gardenin B + 2-oxoglutarate + O2 = nevadensin + formaldehyde + succinate + CO2 + H(+). It catalyses the reaction 8-hydroxysalvigenin + 2-oxoglutarate + O2 = pilosin + formaldehyde + succinate + CO2. It participates in flavonoid metabolism. Its activity is regulated as follows. Inhibited by prohexadione-calcium, a 2-oxoglutarate-dependent dioxygenase (2-ODD) inhibitor, thus leading to a decreased abundance of nevadensin (NEV) and absence of pilosin (PIL) production, but to the accumulation of gardenin B (GARD B) and 8-hydroxysalvigenin (8-OH-SALV). Functionally, oxoglutarate-dependent dioxygenase (2-ODD) acting as a flavonoid 7-O-demethylase involved in the biosynthesis of polymethoxylated flavonoids natural products such as nevadensin and salvigenin, aroma compounds which contribute to the flavor of sweet basil, and exhibit pharmacological activities such as anti-allergic, anti-oxidant, antibacterial, anti-proliferative, and anti-inflammatory effects. Catalyzes the 7-O-demethylation of methoxylated flavones; mediates the conversion of 8-hydroxysalvigenin (8-OH-SALV) to pilosin (PIL) and of gardenin B (GARD B) to nevadensin (NEV). The polypeptide is Oxoglutarate-dependent flavonoid 7-O-demethylase 1 (Ocimum basilicum (Sweet basil)).